Consider the following 188-residue polypeptide: Transcription factor FapR (188 aa).

It belongs to the FapR family.

Its function is as follows. Transcriptional factor involved in regulation of membrane lipid biosynthesis by repressing genes involved in fatty acid and phospholipid metabolism. The chain is Transcription factor FapR from Bacillus licheniformis (strain ATCC 14580 / DSM 13 / JCM 2505 / CCUG 7422 / NBRC 12200 / NCIMB 9375 / NCTC 10341 / NRRL NRS-1264 / Gibson 46).